The chain runs to 278 residues: Cysteine-rich repeat secretory protein 18 (278 aa).

The first 32 residues, 1 to 32, serve as a signal peptide directing secretion; sequence MYSSSSVSKRFVLVPIVVVVTTQLLLVRNVSS. 2 consecutive Gnk2-homologous domains span residues 39–147 and 160–267; these read YLHH…SLDT and PSAK…LYPF.

Belongs to the cysteine-rich repeat secretory protein family.

The protein resides in the secreted. This Arabidopsis thaliana (Mouse-ear cress) protein is Cysteine-rich repeat secretory protein 18 (CRRSP18).